Consider the following 367-residue polypeptide: 2-aminoethylphosphonate--pyruvate transaminase (367 aa).

Lys194 bears the N6-(pyridoxal phosphate)lysine mark.

Belongs to the class-V pyridoxal-phosphate-dependent aminotransferase family. PhnW subfamily. As to quaternary structure, homodimer. Pyridoxal 5'-phosphate is required as a cofactor.

The enzyme catalyses (2-aminoethyl)phosphonate + pyruvate = phosphonoacetaldehyde + L-alanine. Involved in phosphonate degradation. The polypeptide is 2-aminoethylphosphonate--pyruvate transaminase (Klebsiella pneumoniae subsp. pneumoniae (strain ATCC 700721 / MGH 78578)).